Consider the following 296-residue polypeptide: Thiamine-monophosphate kinase (296 aa).

Positions 32, 46, and 48 each coordinate Mg(2+). Residue D55 coordinates substrate. Mg(2+) is bound by residues D76 and D121. ATP-binding positions include 120–121 (GD) and R144. A Mg(2+)-binding site is contributed by D206. S208 is a binding site for ATP. Position 209 (D209) interacts with Mg(2+). Y293 provides a ligand contact to substrate.

Belongs to the thiamine-monophosphate kinase family.

The enzyme catalyses thiamine phosphate + ATP = thiamine diphosphate + ADP. Its pathway is cofactor biosynthesis; thiamine diphosphate biosynthesis; thiamine diphosphate from thiamine phosphate: step 1/1. Functionally, catalyzes the ATP-dependent phosphorylation of thiamine-monophosphate (TMP) to form thiamine-pyrophosphate (TPP), the active form of vitamin B1. This chain is Thiamine-monophosphate kinase, found in Archaeoglobus fulgidus (strain ATCC 49558 / DSM 4304 / JCM 9628 / NBRC 100126 / VC-16).